Consider the following 391-residue polypeptide: UPF0229 protein BCA_0588 (391 aa).

Positions 1 to 16 are enriched in polar residues; it reads MGEENQPNYTISQENW. Disordered stretches follow at residues 1–31 and 80–117; these read MGEENQPNYTISQENWSLHRKGYDDQQRHQE and HVGQGNGDSKVGDVVARDGSGGQKQKGPGKGQGAGDAA. Basic and acidic residues predominate over residues 21–31; the sequence is KGYDDQQRHQE. The segment covering 98 to 115 has biased composition (gly residues); that stretch reads GSGGQKQKGPGKGQGAGD.

This sequence belongs to the UPF0229 family.

The protein is UPF0229 protein BCA_0588 of Bacillus cereus (strain 03BB102).